A 773-amino-acid chain; its full sequence is Endonuclease MutS2 (773 aa).

334-341 (GANAGGKT) is an ATP binding site. The Smr domain maps to 698–773 (VDLRGMRADV…GDGMTMVTLK (76 aa)).

Belongs to the DNA mismatch repair MutS family. MutS2 subfamily. In terms of assembly, homodimer. Binds to stalled ribosomes, contacting rRNA.

Functionally, endonuclease that is involved in the suppression of homologous recombination and thus may have a key role in the control of bacterial genetic diversity. Acts as a ribosome collision sensor, splitting the ribosome into its 2 subunits. Detects stalled/collided 70S ribosomes which it binds and splits by an ATP-hydrolysis driven conformational change. Acts upstream of the ribosome quality control system (RQC), a ribosome-associated complex that mediates the extraction of incompletely synthesized nascent chains from stalled ribosomes and their subsequent degradation. Probably generates substrates for RQC. This chain is Endonuclease MutS2, found in Solidesulfovibrio magneticus (strain ATCC 700980 / DSM 13731 / RS-1) (Desulfovibrio magneticus).